A 138-amino-acid polypeptide reads, in one-letter code: MSLAAVPHLTAGLQTFLAFDFGLQRTGVATGNVLTRTATPQATIAATGDARLKAIELRIREWQPDALVVGIPFHPDGASHENTRRAQKFSRQLRARFGLKVFEVDERYSTTEALAGGAADADAASACIILEQFLRSLP.

This sequence belongs to the YqgF nuclease family.

The protein localises to the cytoplasm. Functionally, could be a nuclease involved in processing of the 5'-end of pre-16S rRNA. This is Putative pre-16S rRNA nuclease from Polaromonas sp. (strain JS666 / ATCC BAA-500).